The sequence spans 364 residues: Methylthioribose-1-phosphate isomerase (364 aa).

D254 (proton donor) is an active-site residue.

The protein belongs to the eIF-2B alpha/beta/delta subunits family. MtnA subfamily.

It localises to the cytoplasm. It is found in the nucleus. It carries out the reaction 5-(methylsulfanyl)-alpha-D-ribose 1-phosphate = 5-(methylsulfanyl)-D-ribulose 1-phosphate. It functions in the pathway amino-acid biosynthesis; L-methionine biosynthesis via salvage pathway; L-methionine from S-methyl-5-thio-alpha-D-ribose 1-phosphate: step 1/6. Its function is as follows. Catalyzes the interconversion of methylthioribose-1-phosphate (MTR-1-P) into methylthioribulose-1-phosphate (MTRu-1-P). In Drosophila yakuba (Fruit fly), this protein is Methylthioribose-1-phosphate isomerase.